A 122-amino-acid chain; its full sequence is Large ribosomal subunit protein uL14 (122 aa).

Belongs to the universal ribosomal protein uL14 family. As to quaternary structure, part of the 50S ribosomal subunit. Forms a cluster with proteins L3 and L19. In the 70S ribosome, L14 and L19 interact and together make contacts with the 16S rRNA in bridges B5 and B8.

In terms of biological role, binds to 23S rRNA. Forms part of two intersubunit bridges in the 70S ribosome. This chain is Large ribosomal subunit protein uL14, found in Kosmotoga olearia (strain ATCC BAA-1733 / DSM 21960 / TBF 19.5.1).